Here is a 203-residue protein sequence, read N- to C-terminus: Outer-membrane lipoprotein carrier protein (203 aa).

Residues 1-21 (MKKIAITCALLSSLVASSVWA) form the signal peptide.

The protein belongs to the LolA family. As to quaternary structure, monomer.

The protein resides in the periplasm. Its function is as follows. Participates in the translocation of lipoproteins from the inner membrane to the outer membrane. Only forms a complex with a lipoprotein if the residue after the N-terminal Cys is not an aspartate (The Asp acts as a targeting signal to indicate that the lipoprotein should stay in the inner membrane). This is Outer-membrane lipoprotein carrier protein from Escherichia coli O139:H28 (strain E24377A / ETEC).